The following is a 402-amino-acid chain: ORC1-type DNA replication protein 17 (402 aa).

Residues Tyr223 and Arg235 each contribute to the ATP site.

Belongs to the CDC6/cdc18 family.

In terms of biological role, involved in regulation of DNA replication. The sequence is that of ORC1-type DNA replication protein 17 (cdc6q) from Haloarcula marismortui (strain ATCC 43049 / DSM 3752 / JCM 8966 / VKM B-1809) (Halobacterium marismortui).